Reading from the N-terminus, the 120-residue chain is uncharacterized protein (120 aa).

An N-acetyltransferase domain is found at 3–120; the sequence is IRYKKAFEKI…EKCEICHGSE (118 aa).

This is an uncharacterized protein from Bacillus methanolicus.